A 494-amino-acid polypeptide reads, in one-letter code: GTPase Der (494 aa).

EngA-type G domains lie at 3-166 and 207-380; these read PVIA…MDAE and IKLA…DCST. Residues 9–16, 56–60, 118–121, 213–220, 260–264, and 325–328 contribute to the GTP site; these read GRPNVGKS, DTGGI, NKTD, DTAGV, and NKWD. In terms of domain architecture, KH-like spans 381-465; it reads KRVGTSLLTR…PIRIQFKEGE (85 aa).

The protein belongs to the TRAFAC class TrmE-Era-EngA-EngB-Septin-like GTPase superfamily. EngA (Der) GTPase family. As to quaternary structure, associates with the 50S ribosomal subunit.

GTPase that plays an essential role in the late steps of ribosome biogenesis. The sequence is that of GTPase Der from Yersinia enterocolitica serotype O:8 / biotype 1B (strain NCTC 13174 / 8081).